The chain runs to 247 residues: 3-deoxy-manno-octulosonate cytidylyltransferase (247 aa).

Belongs to the KdsB family.

It is found in the cytoplasm. It catalyses the reaction 3-deoxy-alpha-D-manno-oct-2-ulosonate + CTP = CMP-3-deoxy-beta-D-manno-octulosonate + diphosphate. Its pathway is nucleotide-sugar biosynthesis; CMP-3-deoxy-D-manno-octulosonate biosynthesis; CMP-3-deoxy-D-manno-octulosonate from 3-deoxy-D-manno-octulosonate and CTP: step 1/1. It functions in the pathway bacterial outer membrane biogenesis; lipopolysaccharide biosynthesis. Functionally, activates KDO (a required 8-carbon sugar) for incorporation into bacterial lipopolysaccharide in Gram-negative bacteria. In Methylobacterium nodulans (strain LMG 21967 / CNCM I-2342 / ORS 2060), this protein is 3-deoxy-manno-octulosonate cytidylyltransferase.